Consider the following 958-residue polypeptide: MEKTYDPQSIEQTLYQNWEEKGYFKPHGDASQGNYCIMIPPPNVTGSLHMGHAFQDTIMDTLIRYQRMKGKNTLWQVGTDHAGIATQMLVERKLEAEEGKSRHDLGRDVFMEKVWEWKAQSGGTITKQLRRMGASVDWDRERFTMDEGLSKAVQEVFVRLYEDDLIYRGKRLVNWDPKLHTAISDLEVENKEKQGHMWHLRYPLADGELTADGKDYLEVATTRPETMLGDSAVAVHPDDERYQALIGKYILLPIVNRRIPIVADDYVDMAFGTGCVKITPAHDFNDYEVGKRHKLPMFNVLTLDAAIRSSAEVVNTDGTINTSLDGSLPERYAGLDRFKARDAIVAEFETLGLLEKIAPHGLKVPYGDRSGVVIEPMLTDQWYVAVAPMAKTAIEAVENGDIKFVPQQYENMYFSWMRDIQDWCISRQLWWGHRIPAWYDTNGKVYVGRTEAEVRAKHDIDDAIALRQDEDVLDTWFSSALWTFSTLGWPDNVEDLKTFHPTDVLVTGFDIIFFWVARMIMMTMHFIKDEDGKPQVPFKTVYVTGLIRDEAGNKMSKSKGNVLDPLDMIDGIDLETLVEKRTGNMMQPQLAAKIEKSTRKEFENGIEAHGTDALRFTLAAMASTGRDINWDMKRLDGYRSFCNKLWNASRYVLMNTEGQDCGPNSPDYQGGEMELSLADRWIIDLFNQTVKTYDEHMASYRFDLAANTLYEFTWNQFCDWYLELTKPVLQNGTEAQMRGTRHTLVNVLEAMQRLMHPMMPYITETIWQRVKPLTGVQGDTIMLAPFPAFDAAKVDATAMADLEWVKQVIVAVRNIRAELNIAPSKPLNALLRGVSAQDKARIEANQAFFATLARLESMTILGEGETAPMSTTGLIGEMELLIPMAGLVDVAAEMARIDKQLEKLTQEIARIEGKLSNEGFVAKAPPAVIDKERAKMADLSRDIDKLTEQKAEFAKLEA.

Residues Pro42–His52 carry the 'HIGH' region motif. Positions Lys554–Ser558 match the 'KMSKS' region motif. Lys557 is a binding site for ATP. Residues Leu887–Leu956 are a coiled coil.

The protein belongs to the class-I aminoacyl-tRNA synthetase family. ValS type 1 subfamily. Monomer.

It is found in the cytoplasm. It carries out the reaction tRNA(Val) + L-valine + ATP = L-valyl-tRNA(Val) + AMP + diphosphate. Its function is as follows. Catalyzes the attachment of valine to tRNA(Val). As ValRS can inadvertently accommodate and process structurally similar amino acids such as threonine, to avoid such errors, it has a 'posttransfer' editing activity that hydrolyzes mischarged Thr-tRNA(Val) in a tRNA-dependent manner. This Shewanella oneidensis (strain ATCC 700550 / JCM 31522 / CIP 106686 / LMG 19005 / NCIMB 14063 / MR-1) protein is Valine--tRNA ligase.